Consider the following 230-residue polypeptide: Probable dual specificity protein phosphatase DDB_G0283417 (230 aa).

In terms of domain architecture, Tyrosine-protein phosphatase spans 78-230 (NNNYESINLY…LEIFEKELLF (153 aa)). The active-site Phosphocysteine intermediate is the Cys174.

Belongs to the protein-tyrosine phosphatase family. Non-receptor class dual specificity subfamily.

It catalyses the reaction O-phospho-L-tyrosyl-[protein] + H2O = L-tyrosyl-[protein] + phosphate. The enzyme catalyses O-phospho-L-seryl-[protein] + H2O = L-seryl-[protein] + phosphate. The catalysed reaction is O-phospho-L-threonyl-[protein] + H2O = L-threonyl-[protein] + phosphate. Functionally, has a dual specificity toward Ser/Thr and Tyr-containing proteins. In Dictyostelium discoideum (Social amoeba), this protein is Probable dual specificity protein phosphatase DDB_G0283417.